Reading from the N-terminus, the 226-residue chain is Fibrillarin-like rRNA/tRNA 2'-O-methyltransferase (226 aa).

S-adenosyl-L-methionine contacts are provided by residues 85-86, 104-105, 129-130, and 149-152; these read TT, EF, DA, and DVAQ.

It belongs to the methyltransferase superfamily. Fibrillarin family. As to quaternary structure, interacts with nop5. Component of box C/D small ribonucleoprotein (sRNP) particles that contain rpl7ae, FlpA and nop5, plus a guide RNA.

In terms of biological role, involved in pre-rRNA and tRNA processing. Utilizes the methyl donor S-adenosyl-L-methionine to catalyze the site-specific 2'-hydroxyl methylation of ribose moieties in rRNA and tRNA. Site specificity is provided by a guide RNA that base pairs with the substrate. Methylation occurs at a characteristic distance from the sequence involved in base pairing with the guide RNA. In Thermococcus gammatolerans (strain DSM 15229 / JCM 11827 / EJ3), this protein is Fibrillarin-like rRNA/tRNA 2'-O-methyltransferase.